The chain runs to 258 residues: MLITISPAKTLDYESPLATEEYSQPELLDQSKRLIRICRELTPAQIASLMGISDKLAGLNAARFGEWHADFTPLNARQAILAFKGDVYTGMQAESFSNKDFDFAQNHLRILSGLYGVLRPLDLMQPYRLEMGIKLENKRGKDLYAFWGDLITEKLNEALEQQGDNVLVNLASDEYFKSVNTKKLAGKIIKPVFLDEKNGKYKIISFYAKKARGLMSQFIIQNQLTQIDRLVEFNLDGYAFDESLSKGNELVFKRPEQH.

Belongs to the UPF0246 family.

The polypeptide is UPF0246 protein plu0566 (Photorhabdus laumondii subsp. laumondii (strain DSM 15139 / CIP 105565 / TT01) (Photorhabdus luminescens subsp. laumondii)).